The primary structure comprises 99 residues: Aspartyl/glutamyl-tRNA(Asn/Gln) amidotransferase subunit C (99 aa).

It belongs to the GatC family. As to quaternary structure, heterotrimer of A, B and C subunits.

It catalyses the reaction L-glutamyl-tRNA(Gln) + L-glutamine + ATP + H2O = L-glutaminyl-tRNA(Gln) + L-glutamate + ADP + phosphate + H(+). The enzyme catalyses L-aspartyl-tRNA(Asn) + L-glutamine + ATP + H2O = L-asparaginyl-tRNA(Asn) + L-glutamate + ADP + phosphate + 2 H(+). Functionally, allows the formation of correctly charged Asn-tRNA(Asn) or Gln-tRNA(Gln) through the transamidation of misacylated Asp-tRNA(Asn) or Glu-tRNA(Gln) in organisms which lack either or both of asparaginyl-tRNA or glutaminyl-tRNA synthetases. The reaction takes place in the presence of glutamine and ATP through an activated phospho-Asp-tRNA(Asn) or phospho-Glu-tRNA(Gln). The sequence is that of Aspartyl/glutamyl-tRNA(Asn/Gln) amidotransferase subunit C from Leptothrix cholodnii (strain ATCC 51168 / LMG 8142 / SP-6) (Leptothrix discophora (strain SP-6)).